A 229-amino-acid polypeptide reads, in one-letter code: Peptide methionine sulfoxide reductase B3, chloroplastic (229 aa).

Residues 1–71 (MGVQHLLKLR…NHNQWAASRC (71 aa)) constitute a chloroplast transit peptide. Residues 102-223 (EEEWEAILSP…NSISLKFIPA (122 aa)) enclose the MsrB domain. Residues Cys141, Cys144, Cys187, and Cys190 each contribute to the Zn(2+) site. Cys159 and Cys212 are oxidised to a cystine. Cys212 functions as the Nucleophile in the catalytic mechanism.

The protein belongs to the MsrB Met sulfoxide reductase family. Zn(2+) is required as a cofactor.

The protein localises to the plastid. It is found in the chloroplast. It catalyses the reaction L-methionyl-[protein] + [thioredoxin]-disulfide + H2O = L-methionyl-(R)-S-oxide-[protein] + [thioredoxin]-dithiol. Functionally, catalyzes the reduction of methionine sulfoxide (MetSO) to methionine in proteins. Plays a protective role against oxidative stress by restoring activity to proteins that have been inactivated by methionine oxidation. MSRB family specifically reduces the MetSO R-enantiomer. The polypeptide is Peptide methionine sulfoxide reductase B3, chloroplastic (MSRB3) (Oryza sativa subsp. japonica (Rice)).